A 26-amino-acid chain; its full sequence is DHAGTVSKAHKQHDVNSVLYKVYEDI.

The protein belongs to the tyrosinase family. Hemocyanin subfamily. In terms of tissue distribution, hemolymph.

The protein resides in the secreted. Its subcellular location is the extracellular space. Functionally, hemocyanins are copper-containing oxygen carriers occurring freely dissolved in the hemolymph of many mollusks and arthropods. The chain is Hemocyanin subunit 5 from Maja squinado (Mediterranean spider crab).